The sequence spans 738 residues: Ethylene receptor 1 (738 aa).

Helical transmembrane passes span 23-43 (ISDF…IYFV), 53-73 (WVLV…LINL), and 92-112 (VLTA…IPDL). Residues Cys-65 and His-69 each coordinate Cu cation. The GAF domain occupies 158–307 (DRHTILKTTL…VVADQVAVAL (150 aa)). Residues 350-585 (VMNHEMRTPM…IFDVKLGISE (236 aa)) form the Histidine kinase domain. A Phosphohistidine; by autocatalysis modification is found at His-353. ADP is bound by residues 470–473 (NAVK), Asp-513, Lys-529, Ser-544, and Leu-548. The region spanning 611–729 (KVLVMDENGV…NIRDVLSDLL (119 aa)) is the Response regulatory domain. The residue at position 659 (Asp-659) is a 4-aspartylphosphate. A Glycyl lysine isopeptide (Lys-Gly) (interchain with G-Cter in ubiquitin) cross-link involves residue Lys-714.

It belongs to the ethylene receptor family. As to quaternary structure, homodimer; disulfide-linked. Heteromer with ERS1, ERS2, ETR2 and EIN4. Interacts with AHP1, AHP2 and AHP3. Interacts with RTE1. Interacts with EIN2. It depends on Cu cation as a cofactor. In terms of processing, autophosphorylated. Phosphorylation at His-353 modulates the interaction with EIN2. In terms of tissue distribution, leaves, roots, stems, seedlings, flowers, anthers, carpels and ovules.

The protein localises to the endoplasmic reticulum membrane. It catalyses the reaction ATP + protein L-histidine = ADP + protein N-phospho-L-histidine.. Ethylene receptor related to bacterial two-component regulators. Acts as a redundant negative regulator of ethylene signaling. In the presence of ethylene, the auto-kinase activity of ETR1 is inhibited and the non-phosphorylated kinase domain binds tightly to the corresponding domain of EIN2. This Arabidopsis thaliana (Mouse-ear cress) protein is Ethylene receptor 1.